A 448-amino-acid chain; its full sequence is Lipoamide acyltransferase component of branched-chain alpha-keto acid dehydrogenase complex, mitochondrial (448 aa).

In terms of domain architecture, Lipoyl-binding spans 30–105; the sequence is VVQFKLSDIG…RVGQALIDVE (76 aa). Lys71 carries the post-translational modification N6-lipoyllysine. Disordered stretches follow at residues 108 to 146 and 191 to 211; these read GNVE…GKVL and TSGS…SKSY. The segment covering 121-136 has biased composition (low complexity); it reads ASSSPEAPKSSAPKAP. Residues 146 to 183 form the Peripheral subunit-binding (PSBD) domain; the sequence is LATPAVRRIAIENKIKLAEVRGTGKDGRVLKEDVLKFL. Polar residues predominate over residues 191–210; the sequence is TSGSTNIRTTHQAPQPSSKS. The CoA site is built by Arg257, Ser272, Asp315, Ser365, Asn366, Gly390, and Ile392. Catalysis depends on residues His418 and Asp422.

This sequence belongs to the 2-oxoacid dehydrogenase family. The cofactor is (R)-lipoate. As to expression, ubiquitously expressed.

Its subcellular location is the mitochondrion matrix. It is found in the cytoplasm. It localises to the cytosol. The protein resides in the cell projection. The protein localises to the dendrite. Its subcellular location is the cilium. The catalysed reaction is N(6)-[(R)-dihydrolipoyl]-L-lysyl-[protein] + 2-methylpropanoyl-CoA = N(6)-[(R)-S(8)-2-methylpropanoyldihydrolipoyl]-L-lysyl-[protein] + CoA. In terms of biological role, the branched-chain alpha-keto dehydrogenase complex catalyzes the overall conversion of alpha-keto acids to acyl-CoA and CO(2). It contains multiple copies of three enzymatic components: branched-chain alpha-keto acid decarboxylase (E1), lipoamide acyltransferase (E2) and lipoamide dehydrogenase (E3). Within this complex, the catalytic function of this enzyme is to accept, and to transfer to coenzyme A, acyl groups that are generated by the branched-chain alpha-keto acid decarboxylase component. Required for the catabolism of branched-chain amino acids and the subsequent synthesis of monomethyl branched-chain fatty acids, which are important for regulating postembryonic growth. The chain is Lipoamide acyltransferase component of branched-chain alpha-keto acid dehydrogenase complex, mitochondrial from Caenorhabditis elegans.